The following is a 528-amino-acid chain: MPVTMSQAFLDNFLGNSPKWFKFAILSFLVINPVVFYLNPFVAGWLLVLEFIFTLAMALKCYPLQPGGLLAIEAVIIGMTSPSQVLHEIEANLEVLLLLIFMVAGIYFMKQLLLFAFTKMITKVRSKIAVSIMCCVASAFLSAFLDALTVIAVIIAVAVGFYSIYHKVASGKNFNDSHDHTSDGQSQLCEEELEAFRGFLRNLLMHAGVGTALGGVCTMVGEPQNLIIAAQANWQFAEFALRMSPVTVPVFVAGVLTCFLVEKFRVFDYGKQLPDAVHKILSDYSAHEDAHRTKHDKIKLIIQALVGVWLIIGLAFHLASVGLIGLSVIILTTAFNGVTNEHQLGKAFEEALPFTALLAVFFAIVGVIIDQQLFAPVIQWALSYEGNTQLVIFYIAIGLLSMVSDNVFVGTVYINEVKAALLDGQITRDQFDLLAVAINTGTNLPSVATPNGQAAFLFLLTSAIAPLIRLSYGRMVWMALPYTIVLSIVGILAIQFGALEQMTQYFYDNNMLLHHTLQEVGNSAASAH.

The next 11 helical transmembrane spans lie at 23-45, 66-86, 95-115, 139-159, 203-223, 241-261, 310-330, 349-369, 390-410, 448-468, and 476-496; these read FAIL…VAGW, PGGL…SQVL, VLLL…LLLF, AFLS…AVAV, LLMH…VGEP, LRMS…CFLV, LIIG…SVII, EEAL…GVII, LVIF…VFVG, ATPN…APLI, and VWMA…AIQF.

This sequence belongs to the NhaB Na(+)/H(+) (TC 2.A.34) antiporter family.

The protein resides in the cell inner membrane. It catalyses the reaction 2 Na(+)(in) + 3 H(+)(out) = 2 Na(+)(out) + 3 H(+)(in). Na(+)/H(+) antiporter that extrudes sodium in exchange for external protons. The sequence is that of Na(+)/H(+) antiporter NhaB from Shewanella piezotolerans (strain WP3 / JCM 13877).